The following is a 175-amino-acid chain: Shikimate kinase (175 aa).

Glycine 14–threonine 19 is an ATP binding site. Serine 18 is a Mg(2+) binding site. Positions 36, 60, and 82 each coordinate substrate. An ATP-binding site is contributed by arginine 120. Arginine 140 contacts substrate. ATP is bound at residue glutamine 157.

It belongs to the shikimate kinase family. Monomer. Requires Mg(2+) as cofactor.

The protein resides in the cytoplasm. It carries out the reaction shikimate + ATP = 3-phosphoshikimate + ADP + H(+). The protein operates within metabolic intermediate biosynthesis; chorismate biosynthesis; chorismate from D-erythrose 4-phosphate and phosphoenolpyruvate: step 5/7. Its function is as follows. Catalyzes the specific phosphorylation of the 3-hydroxyl group of shikimic acid using ATP as a cosubstrate. The polypeptide is Shikimate kinase (Mannheimia succiniciproducens (strain KCTC 0769BP / MBEL55E)).